The primary structure comprises 479 residues: Ammonium transporter Rh type C (479 aa).

Over 1 to 9 the chain is Cytoplasmic; it reads MAWNTNLRW. A helical transmembrane segment spans residues 10–30; sequence RLPLTCLLLQVAMVILFGVFV. The Extracellular segment spans residues 31–60; it reads RYDFDADAHWWTERKHKNLSEVENEFYYRY. N-linked (GlcNAc...) asparagine glycosylation is present at N48. The helical transmembrane segment at 61–81 threads the bilayer; it reads PSFQDVHVMVFVGFGFLMTFL. Residues 82-85 are Cytoplasmic-facing; it reads QRYG. A helical transmembrane segment spans residues 86–106; the sequence is FSAVGFNFLLAAFGIQWALLM. At 107–123 the chain is on the extracellular side; it reads QGWFHFLEGRYIVVGVE. Residues 124-144 form a helical membrane-spanning segment; that stretch reads NLINADFCVASVCVAFGAVLG. The Cytoplasmic segment spans residues 145–148; it reads KVSP. The chain crosses the membrane as a helical span at residues 149 to 169; that stretch reads IQLLIMTFFQVTLFAVNEFIL. Residues 170–177 are Extracellular-facing; sequence LNLLKVKD. A helical membrane pass occupies residues 178–200; sequence AGGSMTIHTFYAYFELTVTRILY. Residues 201–218 lie on the Cytoplasmic side of the membrane; that stretch reads RRNLEQSKERQSSAYQSD. A helical transmembrane segment spans residues 219-239; sequence LFAMIGTLFLWMYWPSFNSAI. Residues 240–250 lie on the Extracellular side of the membrane; that stretch reads SYHGDSQHRAA. The helical transmembrane segment at 251-271 threads the bilayer; it reads INTYCSLAACVLTSVAVSSAL. At 272 to 281 the chain is on the cytoplasmic side; sequence HKKGKLDMVH. Residues 282–302 traverse the membrane as a helical segment; sequence IQNATLAGGVAVGTTAEMMLM. P303 is a topological domain (extracellular). Residues 304–324 form a helical membrane-spanning segment; sequence YGALIIGFICGIISTLGFVYL. Residues 325–345 are Cytoplasmic-facing; sequence TPFLESRLHIQDTCGINNLHG. A helical transmembrane segment spans residues 346–366; it reads IPGIIGGIVGAVTAASASLEV. At 367 to 394 the chain is on the extracellular side; that stretch reads YGKEGLVHSFDFQDFKRDWTARTQGKFQ. Residues 395–415 form a helical membrane-spanning segment; the sequence is IYGLLVTLAMALMGGIIVGLI. The Cytoplasmic portion of the chain corresponds to 416-479; that stretch reads LRLPFWGQPS…PMASSVPLVP (64 aa).

The protein belongs to the ammonium transporter (TC 2.A.49) family. Rh subfamily. As to quaternary structure, homotrimer. In terms of processing, N-glycosylated.

It localises to the apical cell membrane. The enzyme catalyses NH4(+)(in) = NH4(+)(out). It catalyses the reaction methylamine(out) = methylamine(in). The catalysed reaction is CO2(out) = CO2(in). Ammonium transporter involved in the maintenance of acid-base homeostasis. Transports ammonium and its related derivative methylammonium across the plasma membrane of epithelial cells likely contributing to renal transepithelial ammonia transport and ammonia metabolism. Postulated to primarily mediate an electroneutral bidirectional transport of NH3 ammonia species according to a mechanism that implies interaction of an NH4(+) ion with acidic residues of the pore entry followed by dissociation of NH4(+) into NH3 and H(+). As a result NH3 transits through the central pore and is protonated on the extracellular side reforming NH4(+). May act as a CO2 channel providing for renal acid secretion. The polypeptide is Ammonium transporter Rh type C (RHCG) (Macaca mulatta (Rhesus macaque)).